We begin with the raw amino-acid sequence, 276 residues long: Undecaprenyl-diphosphatase 1 (276 aa).

The next 7 membrane-spanning stretches (helical) occupy residues 4-24, 46-63, 83-103, 108-128, 187-207, 217-237, and 252-272; these read ILICKALILGVVEGLTEFLPV, TFDVVIQFGAILAVCWEY, FTLNVVIATIPAIALGLLFEK, VLFSPVPVAFALVVGGAIILW, VATEFSFFLAIPIIFGATLYE, VDSLGLFVLGAVAAFVSAFVC, and VFAWYRIAFGLFVLLVGYSGW.

This sequence belongs to the UppP family.

It is found in the cell inner membrane. The catalysed reaction is di-trans,octa-cis-undecaprenyl diphosphate + H2O = di-trans,octa-cis-undecaprenyl phosphate + phosphate + H(+). Functionally, catalyzes the dephosphorylation of undecaprenyl diphosphate (UPP). Confers resistance to bacitracin. This chain is Undecaprenyl-diphosphatase 1, found in Burkholderia lata (strain ATCC 17760 / DSM 23089 / LMG 22485 / NCIMB 9086 / R18194 / 383).